A 200-amino-acid chain; its full sequence is Nucleoside triphosphate pyrophosphatase (200 aa).

The active-site Proton acceptor is the D75.

This sequence belongs to the Maf family. Requires a divalent metal cation as cofactor.

Its subcellular location is the cytoplasm. It catalyses the reaction a ribonucleoside 5'-triphosphate + H2O = a ribonucleoside 5'-phosphate + diphosphate + H(+). It carries out the reaction a 2'-deoxyribonucleoside 5'-triphosphate + H2O = a 2'-deoxyribonucleoside 5'-phosphate + diphosphate + H(+). In terms of biological role, nucleoside triphosphate pyrophosphatase. May have a dual role in cell division arrest and in preventing the incorporation of modified nucleotides into cellular nucleic acids. This chain is Nucleoside triphosphate pyrophosphatase, found in Synechococcus sp. (strain CC9311).